Consider the following 121-residue polypeptide: Phosphoribosyl-ATP pyrophosphatase (121 aa).

This sequence belongs to the PRA-PH family.

The protein resides in the cytoplasm. The catalysed reaction is 1-(5-phospho-beta-D-ribosyl)-ATP + H2O = 1-(5-phospho-beta-D-ribosyl)-5'-AMP + diphosphate + H(+). Its pathway is amino-acid biosynthesis; L-histidine biosynthesis; L-histidine from 5-phospho-alpha-D-ribose 1-diphosphate: step 2/9. The sequence is that of Phosphoribosyl-ATP pyrophosphatase from Burkholderia cenocepacia (strain ATCC BAA-245 / DSM 16553 / LMG 16656 / NCTC 13227 / J2315 / CF5610) (Burkholderia cepacia (strain J2315)).